Here is a 1102-residue protein sequence, read N- to C-terminus: WASH complex subunit 4 (1102 aa).

This sequence belongs to the SWIP family. In terms of assembly, component of the WASH complex.

The protein localises to the early endosome. Functionally, acts at least in part as component of the WASH complex which may regulate wash nucleation-promoting factor (NPF) activity and is required for its membrane targeting during endosomal sorting. During embryogenesis, not involved in the wash-dependent developmental migration of hemocytes anteriorly from the tail. The protein is WASH complex subunit 4 of Drosophila melanogaster (Fruit fly).